A 139-amino-acid chain; its full sequence is Small ribosomal subunit protein uS12 (139 aa).

This sequence belongs to the universal ribosomal protein uS12 family. As to quaternary structure, part of the 30S ribosomal subunit. Contacts proteins S8 and S17. May interact with IF1 in the 30S initiation complex.

Functionally, with S4 and S5 plays an important role in translational accuracy. Its function is as follows. Interacts with and stabilizes bases of the 16S rRNA that are involved in tRNA selection in the A site and with the mRNA backbone. Located at the interface of the 30S and 50S subunits, it traverses the body of the 30S subunit contacting proteins on the other side and probably holding the rRNA structure together. The combined cluster of proteins S8, S12 and S17 appears to hold together the shoulder and platform of the 30S subunit. The sequence is that of Small ribosomal subunit protein uS12 from Mycoplasma pneumoniae (strain ATCC 29342 / M129 / Subtype 1) (Mycoplasmoides pneumoniae).